The chain runs to 185 residues: Elongation factor P (185 aa).

The protein belongs to the elongation factor P family.

It is found in the cytoplasm. Its pathway is protein biosynthesis; polypeptide chain elongation. Involved in peptide bond synthesis. Stimulates efficient translation and peptide-bond synthesis on native or reconstituted 70S ribosomes in vitro. Probably functions indirectly by altering the affinity of the ribosome for aminoacyl-tRNA, thus increasing their reactivity as acceptors for peptidyl transferase. The protein is Elongation factor P of Paraburkholderia phymatum (strain DSM 17167 / CIP 108236 / LMG 21445 / STM815) (Burkholderia phymatum).